The following is a 413-amino-acid chain: ATP-dependent (S)-NAD(P)H-hydrate dehydratase (413 aa).

Positions 98-402 (NLNHFLSYVP…KSVPNALVWG (305 aa)) constitute a YjeF C-terminal domain. Residues glycine 199 and 252–258 (NFVEYRA) contribute to the (6S)-NADPHX site. Residues 292 to 296 (KGQED) and 311 to 320 (GMPRRCGGQG) each bind ATP. Aspartate 321 is a binding site for (6S)-NADPHX.

It belongs to the NnrD/CARKD family. Mg(2+) is required as a cofactor.

The catalysed reaction is (6S)-NADHX + ATP = ADP + phosphate + NADH + H(+). It catalyses the reaction (6S)-NADPHX + ATP = ADP + phosphate + NADPH + H(+). Its function is as follows. Catalyzes the dehydration of the S-form of NAD(P)HX at the expense of ATP, which is converted to ADP. Together with NAD(P)HX epimerase, which catalyzes the epimerization of the S- and R-forms, the enzyme allows the repair of both epimers of NAD(P)HX, a damaged form of NAD(P)H that is a result of enzymatic or heat-dependent hydration. In Heterostelium pallidum (strain ATCC 26659 / Pp 5 / PN500) (Cellular slime mold), this protein is ATP-dependent (S)-NAD(P)H-hydrate dehydratase.